A 637-amino-acid polypeptide reads, in one-letter code: Glutamate--cysteine ligase catalytic subunit (637 aa).

N-acetylmethionine is present on Met1. A phosphoserine mark is found at Ser5 and Ser8.

The protein belongs to the glutamate--cysteine ligase type 3 family. Heterodimer of a catalytic heavy chain and a regulatory light chain. In terms of tissue distribution, most abundant in kidney. Also found in liver and testis.

It carries out the reaction L-cysteine + L-glutamate + ATP = gamma-L-glutamyl-L-cysteine + ADP + phosphate + H(+). It catalyses the reaction (2S)-2-aminobutanoate + L-glutamate + ATP = gamma-L-glutamyl-(2S)-2-aminobutanoate + ADP + phosphate + H(+). Its pathway is sulfur metabolism; glutathione biosynthesis; glutathione from L-cysteine and L-glutamate: step 1/2. Its activity is regulated as follows. Feedback inhibition by glutathione. Functionally, catalyzes the ATP-dependent ligation of L-glutamate and L-cysteine and participates in the first and rate-limiting step in glutathione biosynthesis. The sequence is that of Glutamate--cysteine ligase catalytic subunit from Rattus norvegicus (Rat).